The following is a 752-amino-acid chain: Phosphoribosylformylglycinamidine synthase subunit PurL (752 aa).

The active site involves His58. ATP is bound by residues Tyr61 and Lys103. Glu105 contributes to the Mg(2+) binding site. Substrate-binding positions include 106-109 and Arg128; that span reads SHNH. Catalysis depends on His107, which acts as the Proton acceptor. Asp129 is a binding site for Mg(2+). Residue Gln253 coordinates substrate. Residue Asp281 participates in Mg(2+) binding. Residue 325–327 coordinates substrate; sequence ESQ. 2 residues coordinate ATP: Asp513 and Gly550. Mg(2+) is bound at residue Asn551. Residue Ser553 coordinates substrate.

This sequence belongs to the FGAMS family. Monomer. Part of the FGAM synthase complex composed of 1 PurL, 1 PurQ and 2 PurS subunits.

The protein localises to the cytoplasm. The catalysed reaction is N(2)-formyl-N(1)-(5-phospho-beta-D-ribosyl)glycinamide + L-glutamine + ATP + H2O = 2-formamido-N(1)-(5-O-phospho-beta-D-ribosyl)acetamidine + L-glutamate + ADP + phosphate + H(+). It participates in purine metabolism; IMP biosynthesis via de novo pathway; 5-amino-1-(5-phospho-D-ribosyl)imidazole from N(2)-formyl-N(1)-(5-phospho-D-ribosyl)glycinamide: step 1/2. Its function is as follows. Part of the phosphoribosylformylglycinamidine synthase complex involved in the purines biosynthetic pathway. Catalyzes the ATP-dependent conversion of formylglycinamide ribonucleotide (FGAR) and glutamine to yield formylglycinamidine ribonucleotide (FGAM) and glutamate. The FGAM synthase complex is composed of three subunits. PurQ produces an ammonia molecule by converting glutamine to glutamate. PurL transfers the ammonia molecule to FGAR to form FGAM in an ATP-dependent manner. PurS interacts with PurQ and PurL and is thought to assist in the transfer of the ammonia molecule from PurQ to PurL. This Streptomyces coelicolor (strain ATCC BAA-471 / A3(2) / M145) protein is Phosphoribosylformylglycinamidine synthase subunit PurL.